A 63-amino-acid chain; its full sequence is Large ribosomal subunit protein uL29 (63 aa).

This sequence belongs to the universal ribosomal protein uL29 family.

This is Large ribosomal subunit protein uL29 from Vibrio parahaemolyticus serotype O3:K6 (strain RIMD 2210633).